We begin with the raw amino-acid sequence, 424 residues long: Cytoplasmic tRNA 2-thiolation protein 2 (424 aa).

Positions 357–385 (PAAPETEEEEELSKKAHMEKSQEKTGDAD) are disordered. The span at 368–385 (LSKKAHMEKSQEKTGDAD) shows a compositional bias: basic and acidic residues.

The protein belongs to the CTU2/NCS2 family.

It is found in the cytoplasm. It participates in tRNA modification; 5-methoxycarbonylmethyl-2-thiouridine-tRNA biosynthesis. Its function is as follows. Plays a central role in 2-thiolation of mcm(5)S(2)U at tRNA wobble positions of tRNA(Lys), tRNA(Glu) and tRNA(Gln). May act by forming a heterodimer with NCS6 that ligates sulfur from thiocarboxylated URM1 onto the uridine of tRNAs at wobble position. Prior mcm(5) tRNA modification by the elongator complex is required for 2-thiolation. May also be involved in protein urmylation. This chain is Cytoplasmic tRNA 2-thiolation protein 2, found in Yarrowia lipolytica (strain CLIB 122 / E 150) (Yeast).